Reading from the N-terminus, the 548-residue chain is C-type lectin domain family 4 member F (548 aa).

Residues 1-42 (MKEAELNRDMARYCTDNQCVSLQPQGLGPKSAALMAPRTLRH) are Cytoplasmic-facing. Residues 43–69 (VQVILALMVVTVIFSLLALFVVASQPW) traverse the membrane as a helical; Signal-anchor for type II membrane protein segment. Over 70 to 548 (RPEWNKEPPS…STGWSAARVG (479 aa)) the chain is Extracellular. Residues asparagine 86, asparagine 92, asparagine 115, asparagine 132, asparagine 209, and asparagine 255 are each glycosylated (N-linked (GlcNAc...) asparagine). The C-type lectin domain maps to 438–538 (KFCTSQGAHL…GSSYPWVCKK (101 aa)). Cystine bridges form between cysteine 440–cysteine 536 and cysteine 516–cysteine 528.

Kupffer cells.

The protein resides in the membrane. Receptor with an affinity for galactose and fucose. Could be involved in endocytosis. This Mus musculus (Mouse) protein is C-type lectin domain family 4 member F (Clec4f).